Here is a 311-residue protein sequence, read N- to C-terminus: Solute carrier family 25 member 36-A (311 aa).

Solcar repeat units follow at residues 4 to 108 (RDTL…SKEK), 116 to 203 (DSTQ…IKRK), and 224 to 308 (SDFV…VVYL). The next 6 helical transmembrane spans lie at 7-27 (LVHL…TCPL), 41-57 (FYIS…ASVA), 111-131 (NVFD…AGFT), 180-200 (MSAS…YESI), 226-246 (FVGM…IAYP), and 291-311 (QIPN…LLNG).

It belongs to the mitochondrial carrier (TC 2.A.29) family.

It is found in the mitochondrion inner membrane. This chain is Solute carrier family 25 member 36-A (slc25a36a), found in Danio rerio (Zebrafish).